A 241-amino-acid chain; its full sequence is Platelet-derived growth factor subunit B (241 aa).

The signal sequence occupies residues 1–20 (MNRCWALFLPLCCYLRLVSA). Residues 21–81 (EGDPIPEELY…ELESSSRGRR (61 aa)) constitute a propeptide, removed in mature form. An N-linked (GlcNAc...) asparagine glycan is attached at Asn-63. 3 disulfide bridges follow: Cys-97–Cys-141, Cys-130–Cys-178, and Cys-134–Cys-180. Residues 191-241 (RSPGTSREQRAKTPQARVTIRTVRIRRPPKGKHRKFKHTHDKAALKETLGA) constitute a propeptide, removed in mature form. The span at 217 to 230 (RPPKGKHRKFKHTH) shows a compositional bias: basic residues. The disordered stretch occupies residues 217–241 (RPPKGKHRKFKHTHDKAALKETLGA).

The protein belongs to the PDGF/VEGF growth factor family. Antiparallel homodimer; disulfide-linked. Antiparallel heterodimer with PDGFA; disulfide-linked. The PDGFB homodimer interacts with PDGFRA and PDGFRB homodimers, and with heterodimers formed by PDGFRA and PDGFRB. The heterodimer composed of PDGFA and PDGFB interacts with PDGFRB homodimers, and with heterodimers formed by PDGFRA and PDGFRB. Interacts with XLKD1. Interacts with LRP1. Interacts with SORL1 (via the N-terminal ectodomain). Interacts with CD82; this interaction inhibits PDGFB-mediated signaling pathway. Localized to vascular smooth muscle cells. Also weakly expressed by cortical interstitial cells but absent in tubules. Up-regulated in areas of renal fibrosis. In mice with unilateral ureteral obstruction, an increased expression in interstitial cells and in some tubules observed after day 4.

Its subcellular location is the secreted. Its function is as follows. Growth factor that plays an essential role in the regulation of embryonic development, cell proliferation, cell migration, survival and chemotaxis. Potent mitogen for cells of mesenchymal origin. Required for normal proliferation and recruitment of pericytes and vascular smooth muscle cells in the central nervous system, skin, lung, heart and placenta. Required for normal blood vessel development, and for normal development of kidney glomeruli. Plays an important role in wound healing. Signaling is modulated by the formation of heterodimers with PDGFA. The polypeptide is Platelet-derived growth factor subunit B (Pdgfb) (Mus musculus (Mouse)).